A 760-amino-acid chain; its full sequence is Elongation factor G, mitochondrial (760 aa).

Residues 1-37 (MIRGMLPRGLRALRPSVSPTVVSSSLHRNFHSSIRRF) constitute a mitochondrion transit peptide. Residues 68-349 (SRLRNIGVSA…AVVDYLPQPN (282 aa)) enclose the tr-type G domain. GTP-binding positions include 77–84 (AHIDSGKT), 148–152 (DTPGH), and 202–205 (NKMD).

This sequence belongs to the TRAFAC class translation factor GTPase superfamily. Classic translation factor GTPase family. EF-G/EF-2 subfamily.

The protein localises to the mitochondrion. It participates in protein biosynthesis; polypeptide chain elongation. Its function is as follows. Mitochondrial GTPase that catalyzes the GTP-dependent ribosomal translocation step during translation elongation. During this step, the ribosome changes from the pre-translocational (PRE) to the post-translocational (POST) state as the newly formed A-site-bound peptidyl-tRNA and P-site-bound deacylated tRNA move to the P and E sites, respectively. Catalyzes the coordinated movement of the two tRNA molecules, the mRNA and conformational changes in the ribosome. The protein is Elongation factor G, mitochondrial of Meyerozyma guilliermondii (strain ATCC 6260 / CBS 566 / DSM 6381 / JCM 1539 / NBRC 10279 / NRRL Y-324) (Yeast).